The sequence spans 421 residues: Medium-chain specific acyl-CoA dehydrogenase, mitochondrial (421 aa).

The N-terminal 25 residues, 1–25 (MAAMFRRSCRVLRSLSHFGWRSQHT), are a transit peptide targeting the mitochondrion. Lys79 bears the N6-acetyllysine mark. An FAD-binding site is contributed by 158–167 (YCVTEPGAGS). Ser167 contributes to the octanoyl-CoA binding site. The residue at position 179 (Lys179) is an N6-succinyllysine. 191–193 (WIT) contacts FAD. Lys212 is modified (N6-acetyllysine; alternate). Residue Lys212 is modified to N6-succinyllysine; alternate. Position 216 (Ser216) interacts with octanoyl-CoA. An N6-acetyllysine; alternate mark is found at Lys217, Lys259, and Lys271. An N6-succinyllysine; alternate mark is found at Lys217, Lys259, and Lys271. Position 278 (Asp278) interacts with octanoyl-CoA. Lys279 is modified (N6-acetyllysine). Arg281 is a binding site for octanoyl-CoA. Residue Lys301 is modified to N6-acetyllysine. Residues 306 to 308 (RKT) and 316 to 317 (HQ) contribute to the FAD site. Positions 349 and 351 each coordinate octanoyl-CoA. Thr351 carries the phosphothreonine modification. Residue 374-378 (QVFGG) coordinates FAD. Glu401 contacts octanoyl-CoA. Glu401 acts as the Proton acceptor in catalysis. Residue 402–405 (GTAQ) participates in FAD binding.

This sequence belongs to the acyl-CoA dehydrogenase family. Homotetramer. Interacts with the heterodimeric electron transfer flavoprotein ETF. FAD serves as cofactor. Post-translationally, acetylated. Could occur at proximity of the cofactor-binding sites and reduce the catalytic activity. Could be deacetylated by SIRT3.

Its subcellular location is the mitochondrion matrix. It carries out the reaction a medium-chain 2,3-saturated fatty acyl-CoA + oxidized [electron-transfer flavoprotein] + H(+) = a medium-chain (2E)-enoyl-CoA + reduced [electron-transfer flavoprotein]. The catalysed reaction is pentanoyl-CoA + oxidized [electron-transfer flavoprotein] + H(+) = (2E)-pentenoyl-CoA + reduced [electron-transfer flavoprotein]. The enzyme catalyses hexanoyl-CoA + oxidized [electron-transfer flavoprotein] + H(+) = (2E)-hexenoyl-CoA + reduced [electron-transfer flavoprotein]. It catalyses the reaction octanoyl-CoA + oxidized [electron-transfer flavoprotein] + H(+) = (2E)-octenoyl-CoA + reduced [electron-transfer flavoprotein]. It carries out the reaction decanoyl-CoA + oxidized [electron-transfer flavoprotein] + H(+) = (2E)-decenoyl-CoA + reduced [electron-transfer flavoprotein]. The catalysed reaction is dodecanoyl-CoA + oxidized [electron-transfer flavoprotein] + H(+) = (2E)-dodecenoyl-CoA + reduced [electron-transfer flavoprotein]. The enzyme catalyses tetradecanoyl-CoA + oxidized [electron-transfer flavoprotein] + H(+) = (2E)-tetradecenoyl-CoA + reduced [electron-transfer flavoprotein]. It catalyses the reaction oxidized [electron-transfer flavoprotein] + hexadecanoyl-CoA + H(+) = (2E)-hexadecenoyl-CoA + reduced [electron-transfer flavoprotein]. It participates in lipid metabolism; mitochondrial fatty acid beta-oxidation. In terms of biological role, medium-chain specific acyl-CoA dehydrogenase is one of the acyl-CoA dehydrogenases that catalyze the first step of mitochondrial fatty acid beta-oxidation, an aerobic process breaking down fatty acids into acetyl-CoA and allowing the production of energy from fats. The first step of fatty acid beta-oxidation consists in the removal of one hydrogen from C-2 and C-3 of the straight-chain fatty acyl-CoA thioester, resulting in the formation of trans-2-enoyl-CoA. Electron transfer flavoprotein (ETF) is the electron acceptor that transfers electrons to the main mitochondrial respiratory chain via ETF-ubiquinone oxidoreductase (ETF dehydrogenase). Among the different mitochondrial acyl-CoA dehydrogenases, medium-chain specific acyl-CoA dehydrogenase acts specifically on acyl-CoAs with saturated 6 to 12 carbons long primary chains. The sequence is that of Medium-chain specific acyl-CoA dehydrogenase, mitochondrial from Sus scrofa (Pig).